Consider the following 251-residue polypeptide: CCN family member 5 (251 aa).

The signal sequence occupies residues 1–23 (MRGNPLIHLLAISFLCILSMVYS). An IGFBP N-terminal domain is found at 24–103 (QLCPAPCACP…EEDDGSCEVN (80 aa)). Cystine bridges form between cysteine 26–cysteine 50, cysteine 30–cysteine 52, cysteine 32–cysteine 53, cysteine 39–cysteine 56, cysteine 64–cysteine 78, and cysteine 70–cysteine 100. Residues 98-164 (GSCEVNGRRY…GRCCPEWVCD (67 aa)) form the VWFC domain. Residues 195 to 239 (CPNWSTAWGPCSTTCGLGIATRVSNQNRFCQLEIQRRLCLSRPCL) enclose the TSP type-1 domain. Residue asparagine 197 is glycosylated (N-linked (GlcNAc...) asparagine).

This sequence belongs to the CCN family.

Its subcellular location is the secreted. Functionally, may play an important role in modulating bone turnover. Promotes the adhesion of osteoblast cells and inhibits the binding of fibrinogen to integrin receptors. In addition, inhibits osteocalcin production. In Mus musculus (Mouse), this protein is CCN family member 5 (Ccn5).